Consider the following 118-residue polypeptide: Large ribosomal subunit protein uL18 (118 aa).

It belongs to the universal ribosomal protein uL18 family. As to quaternary structure, part of the 50S ribosomal subunit; part of the 5S rRNA/L5/L18/L25 subcomplex. Contacts the 5S and 23S rRNAs.

Its function is as follows. This is one of the proteins that bind and probably mediate the attachment of the 5S RNA into the large ribosomal subunit, where it forms part of the central protuberance. The polypeptide is Large ribosomal subunit protein uL18 (Campylobacter jejuni subsp. jejuni serotype O:6 (strain 81116 / NCTC 11828)).